The chain runs to 699 residues: SPS-sensor serine protease component SSY5 (699 aa).

2 disordered regions span residues 1–113 (MVRF…LQGF) and 129–158 (VKEE…GNAR). Residues 1–381 (MVRFFGLNKE…YCVKDYIKKA (381 aa)) constitute a propeptide that is removed on maturation. Positions 8-18 (NKEKNEEKENT) are enriched in basic and acidic residues. The span at 24 to 38 (NEQNAAETSSSNVSG) shows a compositional bias: polar residues. Residues 39 to 51 (NEERIDPNSRDTN) are compositionally biased toward basic and acidic residues. Over residues 61–78 (STTFGSSIQSSSIFSRGR) the composition is skewed to low complexity. Residues 83-93 (TGASSSMATSE) are compositionally biased toward polar residues. Low complexity predominate over residues 144–154 (SSSTSSTLATS). A serine protease region spans residues 459 to 699 (FAITCAHVVL…QWDIDPQLDG (241 aa)). Residues His465, Asp545, and Ser640 each act as charge relay system in the active site.

It belongs to the peptidase S64 family. Component of the plasma membrane SPS (SSY1-PTR3-SSY5) amino acid sensor complex. The propeptide is autoproteolytically cleaved from the catalytic domain but remains associated, forming an inactive protease complex. This processing occurs even in the absence of signaling.

It is found in the cell membrane. In terms of biological role, protease component of the SPS-sensor system, which regulates the expression of several amino acid-metabolizing enzymes and amino acid- and peptide-permeases in response to extracellular amino acid levels by controlling the activity of two transcription factors, STP1 and STP2. Catalyzes the activation of these transcription factors, which are synthesized as latent cytoplasmic precursors, by proteolytic removal of an N-terminal inhibitory domain containing cytoplasmic retention motifs. SSY5 binds as an inactive protease complex to STP1. In response to extracellular amino acids and dependent on the other SPS-sensor components, the inhibitory propeptide is induced to dissociate, and thereby enables the catalytic domain to process STP1. In Saccharomyces cerevisiae (strain AWRI1631) (Baker's yeast), this protein is SPS-sensor serine protease component SSY5 (SSY5).